The primary structure comprises 223 residues: MAKLILATFAVVFMALAATSLAGDPDMLQDVCVADYKSLKGPLRLNGFPCKRIENVTANDFFFDGLMKAGNTGNAVGSVVTAASVESLPGLNTMGVSMARIDYAPWGLNPPHTHPRATEIIFVVEGSLDVGFVTTANKLFTRTVCKGEVFVFPRGLVHFQKNNGNTPAFAIAALNSQLPGTQSIAAALFGAAPPLPSDTLARAFQVDGGMVEFIKSKFVPPKY.

The first 22 residues, 1–22 (MAKLILATFAVVFMALAATSLA), serve as a signal peptide directing secretion. Cysteine 32 and cysteine 50 are disulfide-bonded. The N-linked (GlcNAc...) asparagine glycan is linked to asparagine 55. Residues 64-212 (DGLMKAGNTG…AFQVDGGMVE (149 aa)) form the Cupin type-1 domain. The Mn(2+) site is built by histidine 112, histidine 114, glutamate 119, and histidine 158.

This sequence belongs to the germin family. Oligomer (believed to be a pentamer but probably hexamer).

The protein localises to the secreted. Its subcellular location is the extracellular space. The protein resides in the apoplast. Its function is as follows. May play a role in plant defense. Probably has no oxalate oxidase activity even if the active site is conserved. The sequence is that of Germin-like protein 1-3 (GER8) from Oryza sativa subsp. japonica (Rice).